A 218-amino-acid polypeptide reads, in one-letter code: Adenylate kinase (218 aa).

10 to 15 serves as a coordination point for ATP; that stretch reads GAGKGT. The tract at residues 30–59 is NMP; sequence STGDMLRAAVKAGSEMGLKAKAVMDAGQLV. AMP contacts are provided by residues Thr-31, Arg-36, 57–59, 85–88, and Gln-92; these read QLV and GFPR. The interval 122–159 is LID; sequence GRRVHEASGRTYHLVYNPPKVEGKDDVTGEDLVQRADD. ATP is bound by residues Arg-123 and 132–133; that span reads TY. 2 residues coordinate AMP: Arg-156 and Arg-167. Residue Gly-203 coordinates ATP.

It belongs to the adenylate kinase family. In terms of assembly, monomer.

Its subcellular location is the cytoplasm. It carries out the reaction AMP + ATP = 2 ADP. It functions in the pathway purine metabolism; AMP biosynthesis via salvage pathway; AMP from ADP: step 1/1. Catalyzes the reversible transfer of the terminal phosphate group between ATP and AMP. Plays an important role in cellular energy homeostasis and in adenine nucleotide metabolism. The protein is Adenylate kinase of Marinomonas sp. (strain MWYL1).